The primary structure comprises 751 residues: Photosystem I P700 chlorophyll a apoprotein A1 (751 aa).

8 helical membrane passes run 73 to 96, 159 to 182, 198 to 222, 294 to 312, 349 to 372, 388 to 414, 435 to 457, and 532 to 550; these read IFSAHFGQLSVIFLWLSGMYFHGA, LYCTAIGGLAMAALMLFAGWFHYH, MNHHLAGLLGLGCLGWTGHQIHLSL, TAHHHLALAVLFLAAGHMY, WHAQLAINLAMMGSLSIIVAHHMY, LSLFTHHMWIGGFCIVGAGAHASIFMV, AIVSHLNWVCIFLGFHSFGLYIH, and FLVHHIHAFTIHVTVLILV. The [4Fe-4S] cluster site is built by C574 and C583. 2 helical membrane-spanning segments follow: residues 590–611 and 665–687; these read HVFLGLFWMYNSLSVAIFHFSW and LSAYGLIFLAAHFVWAFSLMFLF. Residue H676 participates in chlorophyll a' binding. Chlorophyll a is bound by residues M684 and Y692. Residue W693 coordinates phylloquinone. Residues 725–745 form a helical membrane-spanning segment; sequence AVGVAHYLLGGIGTTWAFFLA.

It belongs to the PsaA/PsaB family. The PsaA/B heterodimer binds the P700 chlorophyll special pair and subsequent electron acceptors. PSI consists of a core antenna complex that captures photons, and an electron transfer chain that converts photonic excitation into a charge separation. The eukaryotic PSI reaction center is composed of at least 11 subunits. The cofactor is P700 is a chlorophyll a/chlorophyll a' dimer, A0 is one or more chlorophyll a, A1 is one or both phylloquinones and FX is a shared 4Fe-4S iron-sulfur center..

The protein resides in the plastid. Its subcellular location is the chloroplast thylakoid membrane. It catalyses the reaction reduced [plastocyanin] + hnu + oxidized [2Fe-2S]-[ferredoxin] = oxidized [plastocyanin] + reduced [2Fe-2S]-[ferredoxin]. PsaA and PsaB bind P700, the primary electron donor of photosystem I (PSI), as well as the electron acceptors A0, A1 and FX. PSI is a plastocyanin/cytochrome c6-ferredoxin oxidoreductase, converting photonic excitation into a charge separation, which transfers an electron from the donor P700 chlorophyll pair to the spectroscopically characterized acceptors A0, A1, FX, FA and FB in turn. Oxidized P700 is reduced on the lumenal side of the thylakoid membrane by plastocyanin or cytochrome c6. This chain is Photosystem I P700 chlorophyll a apoprotein A1, found in Pyropia yezoensis (Susabi-nori).